A 106-amino-acid chain; its full sequence is UPF0060 membrane protein RHE_CH01408 (106 aa).

Transmembrane regions (helical) follow at residues 4–24, 30–50, 59–79, and 86–106; these read IIYA…WAWL, AWWL…LTLV, FAAY…LIEG, and DIGG…APRA.

It belongs to the UPF0060 family.

The protein resides in the cell inner membrane. This Rhizobium etli (strain ATCC 51251 / DSM 11541 / JCM 21823 / NBRC 15573 / CFN 42) protein is UPF0060 membrane protein RHE_CH01408.